Consider the following 247-residue polypeptide: MNIIPCSIKTLKGLYDISGVEVGQHFYWQIGSFQIHAQVLITSWVVITILLGSVVIAVRNPQTVPMDGQNFFEYVLEFIRDLSKTQIGEEYGPWVPFIGTMFLFIFVSNWSGALLPWKIIELPHGELAAPTNDINTTVALALLTSAAYFYAGLSKKGLSYFEKYIKPTPILLPINILEDFTKPLSLSFRLFGNILADELVVVVLVSLVPLVVPIPVMFLGLFTSGIQALIFATLAAAYIGESMEGHH.

5 consecutive transmembrane segments (helical) span residues 38–58 (QVLITSWVVITILLGSVVIAV), 95–115 (VPFIGTMFLFIFVSNWSGALL), 134–154 (INTTVALALLTSAAYFYAGLS), 199–219 (LVVVVLVSLVPLVVPIPVMFL), and 220–240 (GLFTSGIQALIFATLAAAYIG).

This sequence belongs to the ATPase A chain family. In terms of assembly, F-type ATPases have 2 components, CF(1) - the catalytic core - and CF(0) - the membrane proton channel. CF(1) has five subunits: alpha(3), beta(3), gamma(1), delta(1), epsilon(1). CF(0) has four main subunits: a, b, b' and c.

It localises to the plastid. Its subcellular location is the chloroplast thylakoid membrane. In terms of biological role, key component of the proton channel; it plays a direct role in the translocation of protons across the membrane. The protein is ATP synthase subunit a, chloroplastic of Lolium perenne (Perennial ryegrass).